The following is a 169-amino-acid chain: uncharacterized protein (169 aa).

This is an uncharacterized protein from Mycoplasma genitalium (strain ATCC 33530 / DSM 19775 / NCTC 10195 / G37) (Mycoplasmoides genitalium).